A 466-amino-acid polypeptide reads, in one-letter code: Glutamate decarboxylase beta (466 aa).

2 residues coordinate substrate: Thr-62 and Asn-83. Residues 126-127 (SS), Thr-212, and His-275 contribute to the pyridoxal 5'-phosphate site. Lys-276 is subject to N6-(pyridoxal phosphate)lysine. Residues Lys-446, Lys-453, and Lys-464 each carry the N6-acetyllysine modification.

It belongs to the group II decarboxylase family. As to quaternary structure, homohexamer composed of three dimers. Pyridoxal 5'-phosphate serves as cofactor.

The enzyme catalyses L-glutamate + H(+) = 4-aminobutanoate + CO2. Its function is as follows. Converts glutamate to gamma-aminobutyrate (GABA), consuming one intracellular proton in the reaction. The gad system helps to maintain a near-neutral intracellular pH when cells are exposed to extremely acidic conditions. The ability to survive transit through the acidic conditions of the stomach is essential for successful colonization of the mammalian host by commensal and pathogenic bacteria. In Shigella flexneri, this protein is Glutamate decarboxylase beta (gadB).